Reading from the N-terminus, the 214-residue chain is MINRTSIIKQPDKISSFCDVYKLQKKYQDALISGKSNIDFIWLGEHQLCYTIGRGSNMGNLLFSLDEQDVFKIDRGGEVTCHMPGQLVTYLVLDLHNFNKDLNWYLRKIEKIIIKVLSSFNIDSSTKDGFTGVWTGERKIASIGIGCKRWVTIHGFSINVNCKLENFDKIVPCGIQGCQMANMSDYKKNLDIKEVKIIVKKIIQEEFYFNFISE.

Positions 35 to 211 constitute a BPL/LPL catalytic domain; it reads KSNIDFIWLG…IIQEEFYFNF (177 aa). Substrate contacts are provided by residues 75-82, 142-144, and 155-157; these read RGGEVTCH, SIG, and GFS. The active-site Acyl-thioester intermediate is cysteine 173.

This sequence belongs to the LipB family.

The protein localises to the cytoplasm. The enzyme catalyses octanoyl-[ACP] + L-lysyl-[protein] = N(6)-octanoyl-L-lysyl-[protein] + holo-[ACP] + H(+). It functions in the pathway protein modification; protein lipoylation via endogenous pathway; protein N(6)-(lipoyl)lysine from octanoyl-[acyl-carrier-protein]: step 1/2. Its function is as follows. Catalyzes the transfer of endogenously produced octanoic acid from octanoyl-acyl-carrier-protein onto the lipoyl domains of lipoate-dependent enzymes. Lipoyl-ACP can also act as a substrate although octanoyl-ACP is likely to be the physiological substrate. This is Octanoyltransferase from Prochlorococcus marinus (strain MIT 9515).